Here is a 325-residue protein sequence, read N- to C-terminus: Transcription initiation factor IIB 2 (325 aa).

The span at 1–13 (MSDSTIRTYSSDQ) shows a compositional bias: polar residues. The segment at 1-29 (MSDSTIRTYSSDQRQTDNDETVSTPDEDV) is disordered. Residues 28 to 58 (DVLTCPECGGQVIDDEEHGESVCVDCGLVVE) form a TFIIB-type zinc finger. Residues Cys32, Cys35, Cys50, and Cys53 each contribute to the Zn(2+) site. Residues 73–93 (STEKDEKSRVGAPTTNMMHDK) are disordered. 2 repeat units span residues 144-227 (GEIE…VREL) and 238-319 (QYVP…ELLE).

This sequence belongs to the TFIIB family.

In terms of biological role, stabilizes TBP binding to an archaeal box-A promoter. Also responsible for recruiting RNA polymerase II to the pre-initiation complex (DNA-TBP-TFIIB). The polypeptide is Transcription initiation factor IIB 2 (Halobacterium salinarum (strain ATCC 700922 / JCM 11081 / NRC-1) (Halobacterium halobium)).